Consider the following 206-residue polypeptide: Small ribosomal subunit protein uS4A (206 aa).

The S4 RNA-binding domain maps to 98-164; it reads LRLDNVAYKL…EKFKTFAENP (67 aa).

It belongs to the universal ribosomal protein uS4 family. In terms of assembly, part of the 30S ribosomal subunit. Contacts protein S5. The interaction surface between S4 and S5 is involved in control of translational fidelity.

Its function is as follows. One of the primary rRNA binding proteins, it binds directly to 16S rRNA where it nucleates assembly of the body of the 30S subunit. With S5 and S12 plays an important role in translational accuracy. This Clostridium acetobutylicum (strain ATCC 824 / DSM 792 / JCM 1419 / IAM 19013 / LMG 5710 / NBRC 13948 / NRRL B-527 / VKM B-1787 / 2291 / W) protein is Small ribosomal subunit protein uS4A (rspD1).